The chain runs to 151 residues: Endoribonuclease YbeY (151 aa).

Positions 108, 112, and 118 each coordinate Zn(2+).

The protein belongs to the endoribonuclease YbeY family. Zn(2+) is required as a cofactor.

It localises to the cytoplasm. Its function is as follows. Single strand-specific metallo-endoribonuclease involved in late-stage 70S ribosome quality control and in maturation of the 3' terminus of the 16S rRNA. This Porphyromonas gingivalis (strain ATCC 33277 / DSM 20709 / CIP 103683 / JCM 12257 / NCTC 11834 / 2561) protein is Endoribonuclease YbeY.